The following is a 144-amino-acid chain: D-aminoacyl-tRNA deacylase (144 aa).

Residues 136–137 carry the Gly-cisPro motif, important for rejection of L-amino acids motif; the sequence is GP.

The protein belongs to the DTD family. In terms of assembly, homodimer.

The protein resides in the cytoplasm. It catalyses the reaction glycyl-tRNA(Ala) + H2O = tRNA(Ala) + glycine + H(+). The catalysed reaction is a D-aminoacyl-tRNA + H2O = a tRNA + a D-alpha-amino acid + H(+). An aminoacyl-tRNA editing enzyme that deacylates mischarged D-aminoacyl-tRNAs. Also deacylates mischarged glycyl-tRNA(Ala), protecting cells against glycine mischarging by AlaRS. Acts via tRNA-based rather than protein-based catalysis; rejects L-amino acids rather than detecting D-amino acids in the active site. By recycling D-aminoacyl-tRNA to D-amino acids and free tRNA molecules, this enzyme counteracts the toxicity associated with the formation of D-aminoacyl-tRNA entities in vivo and helps enforce protein L-homochirality. The polypeptide is D-aminoacyl-tRNA deacylase (Actinobacillus succinogenes (strain ATCC 55618 / DSM 22257 / CCUG 43843 / 130Z)).